The sequence spans 131 residues: C-type natriuretic peptide (131 aa).

Positions 1–20 (MMCKALVFAVLLLAVPLERA) are cleaved as a signal peptide. Positions 21 to 109 (DSRALRTPVD…KRALPDRAKR (89 aa)) are excised as a propeptide. Cysteines 115 and 131 form a disulfide.

Belongs to the natriuretic peptide family. In terms of tissue distribution, highly expressed in brain and liver, and moderately in gut, gills and heart. Expressed to a low level in atrium, ventricle and liver of fresh water eels.

It is found in the secreted. In terms of biological role, hormone which plays a role in endochondral ossification through regulation of cartilaginous growth plate chondrocytes proliferation and differentiation. May also be vasoactive and natriuretic. May be important for freshwater adaptation. This Anguilla japonica (Japanese eel) protein is C-type natriuretic peptide (cnp).